Consider the following 132-residue polypeptide: Telomere bouquet protein 1 (132 aa).

As to quaternary structure, interacts with bqt2 and sad1. The bqt1-bqt2-sad1 complex binds rap1.

The protein localises to the cytoplasm. The protein resides in the cytoskeleton. Its subcellular location is the microtubule organizing center. It localises to the spindle pole body. It is found in the chromosome. The protein localises to the telomere. Its function is as follows. Involved in chromosome segregation. During meiotic prophase, connects telomeres to the spindle pole body by forming a bridge between the telomere protein rap1 and the spindle pole body protein sad1. The chain is Telomere bouquet protein 1 (bqt1) from Schizosaccharomyces pombe (strain 972 / ATCC 24843) (Fission yeast).